The primary structure comprises 90 residues: Bombyxin B-3 (90 aa).

An N-terminal signal peptide occupies residues 1-20 (MMKTTIMFMLVVVISLTYSS). Cystine bridges form between cysteine 30-cysteine 76, cysteine 42-cysteine 89, and cysteine 75-cysteine 80. A propeptide spans 49-67 (SGAQYAPYFWTRQYLGSRG) (c peptide like).

The protein belongs to the insulin family. As to quaternary structure, heterodimer of a B chain and an A chain linked by two disulfide bonds.

It localises to the secreted. Functionally, brain peptide responsible for activation of prothoracic glands to produce ecdysone in insects. The polypeptide is Bombyxin B-3 (BBXB3) (Bombyx mori (Silk moth)).